Here is a 338-residue protein sequence, read N- to C-terminus: GTPase Obg (338 aa).

One can recognise an Obg domain in the interval 1–159; that stretch reads MKFLDKAIIH…RILRLELILI (159 aa). Residues 160 to 333 enclose the OBG-type G domain; the sequence is AHVGTLGLPN…IVKKIYDFLK (174 aa). Residues 166–173, 191–195, 213–216, 283–286, and 314–316 each bind GTP; these read GLPNSGKS, FTTLK, DIPG, NKID, and SAI. Residues serine 173 and threonine 193 each contribute to the Mg(2+) site.

This sequence belongs to the TRAFAC class OBG-HflX-like GTPase superfamily. OBG GTPase family. Monomer. Requires Mg(2+) as cofactor.

The protein resides in the cytoplasm. Its function is as follows. An essential GTPase which binds GTP, GDP and possibly (p)ppGpp with moderate affinity, with high nucleotide exchange rates and a fairly low GTP hydrolysis rate. Plays a role in control of the cell cycle, stress response, ribosome biogenesis and in those bacteria that undergo differentiation, in morphogenesis control. This Buchnera aphidicola subsp. Baizongia pistaciae (strain Bp) protein is GTPase Obg.